Here is a 215-residue protein sequence, read N- to C-terminus: Cytochrome c biogenesis ATP-binding export protein CcmA (215 aa).

Positions 12-215 (LAAHALTYSR…TRLLHLQKAP (204 aa)) constitute an ABC transporter domain. 44–51 (GPNGIGKT) provides a ligand contact to ATP.

It belongs to the ABC transporter superfamily. CcmA exporter (TC 3.A.1.107) family. The complex is composed of two ATP-binding proteins (CcmA) and two transmembrane proteins (CcmB).

Its subcellular location is the cell inner membrane. The catalysed reaction is heme b(in) + ATP + H2O = heme b(out) + ADP + phosphate + H(+). Functionally, part of the ABC transporter complex CcmAB involved in the biogenesis of c-type cytochromes; once thought to export heme, this seems not to be the case, but its exact role is uncertain. Responsible for energy coupling to the transport system. In Xylella fastidiosa (strain Temecula1 / ATCC 700964), this protein is Cytochrome c biogenesis ATP-binding export protein CcmA.